Reading from the N-terminus, the 806-residue chain is NADH:(hydroxy)cinnamate reductase subunit CrdB (806 aa).

Position 257 is an FMN phosphoryl serine (Ser-257). FAD is bound by residues Ala-310, Glu-329, Asn-337, Thr-338, Gly-342, Gly-343, and Asp-576. Arg-635 (proton donor) is an active-site residue. His-742, Glu-771, Ala-786, and Leu-787 together coordinate FAD.

The protein belongs to the FAD-dependent oxidoreductase 2 family. FRD/SDH subfamily. In terms of assembly, NADH:(hydroxy)cinnamate reductase Crd is a heterodimer composed of CrdA and CrdB subunits, encoded by adjacent genes. It depends on FAD as a cofactor. The cofactor is FMN. Is flavinylated on Ser-257 by ApbE, encoded in a neighboring gene. Covalent attachment of FMN is essential for catalytic activity.

The enzyme catalyses 3-phenylpropanoate + NAD(+) = (E)-cinnamate + NADH + H(+). It carries out the reaction 3-(3,4-dihydroxyphenyl)propanoate + NAD(+) = (E)-caffeate + NADH + H(+). It catalyses the reaction phloretate + NAD(+) = (E)-4-coumarate + NADH + H(+). The catalysed reaction is dihydroferulate + NAD(+) = (E)-ferulate + NADH + H(+). Is inactivated by molecular oxygen, allowing regulation of Crd activity by medium oxygen level. In terms of biological role, component of the NADH:(hydroxy)cinnamate reductase Crd that catalyzes the reduction of the double bond in cinnamate, p-coumarate, caffeate, and ferulate under anaerobic conditions with NADH or methyl viologen as the electron donor. Is moderately active against acrylate and practically inactive against urocanate, fumarate, methacrylate and crotonate. CrdB is the catalytic subunit that binds substrates. Is likely involved in protecting V.ruber from (hydroxy)cinnamate poisoning. In Vibrio ruber (strain DSM 16370 / JCM 11486 / BCRC 17186 / CECT 7878 / LMG 23124 / VR1), this protein is NADH:(hydroxy)cinnamate reductase subunit CrdB.